A 411-amino-acid chain; its full sequence is Calmodulin-binding receptor-like cytoplasmic kinase 2 (411 aa).

Disordered regions lie at residues 1–44 and 66–99; these read MPSR…DTTT and SNYI…YGNA. Composition is skewed to low complexity over residues 16–44 and 66–95; these read TTSS…DTTT and SNYI…VQRS. Thr108 is subject to Phosphothreonine. The Protein kinase domain occupies 119 to 398; the sequence is FSPSFRIGQG…MKKCSEILWG (280 aa). Residues 125–133 and Lys147 each bind ATP; that span reads IGQGGFGTV. The interval 134–159 is caM-binding; the sequence is YKVKLRDGKTFAVKRAKKSMHDDRQG. The active-site Proton acceptor is Asp247. 2 positions are modified to phosphoserine: Ser251 and Ser283. Residues Thr284 and Thr289 each carry the phosphothreonine modification. Phosphotyrosine is present on Tyr297.

Belongs to the protein kinase superfamily. Ser/Thr protein kinase family. In terms of assembly, interacts with calmodulin (CaM) in a Ca(2+)-dependent manner.

It localises to the cytoplasm. The catalysed reaction is L-seryl-[protein] + ATP = O-phospho-L-seryl-[protein] + ADP + H(+). It carries out the reaction L-threonyl-[protein] + ATP = O-phospho-L-threonyl-[protein] + ADP + H(+). This is Calmodulin-binding receptor-like cytoplasmic kinase 2 (CRCK2) from Arabidopsis thaliana (Mouse-ear cress).